A 118-amino-acid chain; its full sequence is Small ribosomal subunit protein uS13 (118 aa).

The segment at 93–118 (RGLPVRGQRTKTNARTRKGPRKPIRK) is disordered.

It belongs to the universal ribosomal protein uS13 family. Part of the 30S ribosomal subunit. Forms a loose heterodimer with protein S19. Forms two bridges to the 50S subunit in the 70S ribosome.

In terms of biological role, located at the top of the head of the 30S subunit, it contacts several helices of the 16S rRNA. In the 70S ribosome it contacts the 23S rRNA (bridge B1a) and protein L5 of the 50S subunit (bridge B1b), connecting the 2 subunits; these bridges are implicated in subunit movement. Contacts the tRNAs in the A and P-sites. The protein is Small ribosomal subunit protein uS13 of Pseudomonas syringae pv. tomato (strain ATCC BAA-871 / DC3000).